A 260-amino-acid polypeptide reads, in one-letter code: MPLTPADVHNVAFSKPPIGKRGYNEDEVDAFLDLVENELTRLIEENSDLRQRINELDQELAAGGGAGVTPQATQAIPAYEPEPGKPAPAAVSAGMNEEQALKAARVLSLAQDTADRLTNTAKAESDKMLADARANAEQILGEARHTADATVAEARQRADAMLADAQSRSEAQLRQAQEKADALQADAERKHSEIMGTINQQRAVLEGRLEQLRTFEREYRTRLKTYLESQLEELGQRGSAAPVDSNADAGGFDQFNRGKN.

Residues 31-64 (FLDLVENELTRLIEENSDLRQRINELDQELAAGG) are a coiled coil. At Thr-73 the chain carries Phosphothreonine. Residues 161–196 (MLADAQSRSEAQLRQAQEKADALQADAERKHSEIMG) are a coiled coil. The tract at residues 233–260 (ELGQRGSAAPVDSNADAGGFDQFNRGKN) is disordered.

It belongs to the DivIVA family. Forms homooligomers. Post-translationally, phosphorylated by PknA. Phosphorylation enhances polar localization, which in turn heightens polar peptidoglycan biosynthesis.

Its subcellular location is the cytoplasm. Important for maintaining cell shape and cell wall integrity by localizing peptidoglycan synthesis to the cell poles. In Mycobacterium tuberculosis (strain CDC 1551 / Oshkosh), this protein is Cell wall synthesis protein Wag31 (wag31).